The chain runs to 222 residues: Peptide methionine sulfoxide reductase MsrA (222 aa).

Residue Cys54 is part of the active site.

The protein belongs to the MsrA Met sulfoxide reductase family.

The catalysed reaction is L-methionyl-[protein] + [thioredoxin]-disulfide + H2O = L-methionyl-(S)-S-oxide-[protein] + [thioredoxin]-dithiol. The enzyme catalyses [thioredoxin]-disulfide + L-methionine + H2O = L-methionine (S)-S-oxide + [thioredoxin]-dithiol. Functionally, has an important function as a repair enzyme for proteins that have been inactivated by oxidation. Catalyzes the reversible oxidation-reduction of methionine sulfoxide in proteins to methionine. This is Peptide methionine sulfoxide reductase MsrA from Methylococcus capsulatus (strain ATCC 33009 / NCIMB 11132 / Bath).